A 188-amino-acid polypeptide reads, in one-letter code: Shikimate kinase (188 aa).

Residue 21–26 (GAGKTT) coordinates ATP. Thr-25 provides a ligand contact to Mg(2+). The substrate site is built by Asp-43, Arg-67, and Gly-90. Residue Arg-130 participates in ATP binding. Arg-148 lines the substrate pocket.

It belongs to the shikimate kinase family. As to quaternary structure, monomer. Mg(2+) serves as cofactor.

It is found in the cytoplasm. It catalyses the reaction shikimate + ATP = 3-phosphoshikimate + ADP + H(+). It functions in the pathway metabolic intermediate biosynthesis; chorismate biosynthesis; chorismate from D-erythrose 4-phosphate and phosphoenolpyruvate: step 5/7. Its function is as follows. Catalyzes the specific phosphorylation of the 3-hydroxyl group of shikimic acid using ATP as a cosubstrate. This Geobacillus kaustophilus (strain HTA426) protein is Shikimate kinase.